The following is a 110-amino-acid chain: Glutaredoxin-1 (110 aa).

The region spanning 7 to 110 is the Glutaredoxin domain; sequence IKHVKDLIAE…EELLEPILAN (104 aa). Lysine 11 participates in a covalent cross-link: Glycyl lysine isopeptide (Lys-Gly) (interchain with G-Cter in ubiquitin). Residues 24–29, glutamine 63, valine 75, and 88–89 each bind glutathione; these read KTYCPY and ND. The residue at position 27 (cysteine 27) is an S-glutathionyl cysteine; alternate. Cysteines 27 and 30 form a disulfide.

The protein belongs to the glutaredoxin family.

Its subcellular location is the cytoplasm. The protein resides in the nucleus. It catalyses the reaction 2 glutathione + H2O2 = glutathione disulfide + 2 H2O. The enzyme catalyses 1-chloro-2,4-dinitrobenzene + glutathione = 2,4-dinitrophenyl-S-glutathione + chloride + H(+). It carries out the reaction RX + glutathione = an S-substituted glutathione + a halide anion + H(+). Its function is as follows. Component of the glutathione system which performs several activities such as glutathione-dependent oxidoreductase, glutathione peroxidase and glutathione S-transferase (GST) activity. The disulfide bond functions as an electron carrier in the glutathione-dependent synthesis of deoxyribonucleotides by the enzyme ribonucleotide reductase. In addition, it is also involved in reducing cytosolic protein- and non-protein-disulfides in a coupled system with glutathione reductase. Required for resistance to reactive oxygen species (ROS) by directly reducing hydroperoxides and for the detoxification of ROS-mediated damage. GRX1 is less active as an oxidoreductase than GRX2. The sequence is that of Glutaredoxin-1 (GRX1) from Saccharomyces cerevisiae (strain ATCC 204508 / S288c) (Baker's yeast).